The following is a 657-amino-acid chain: Protein mono-ADP-ribosyltransferase TIPARP (657 aa).

The span at 1–10 (MEMETTEPEP) shows a compositional bias: acidic residues. The disordered stretch occupies residues 1 to 21 (MEMETTEPEPDCVVQPPSPPD). An ADP-ribosylcysteine modification is found at C39. A Nuclear localization signal motif is present at residues 41–47 (KKKDQKR). Residues 237–264 (ENGIEICMDFLQGTCIYGRDCLKHHTVL) form a C3H1-type zinc finger. The WWE domain occupies 332–410 (STPPSSNVNS…RRPLFRSCFI (79 aa)). The region spanning 449–657 (YPETWVYMHP…YEEVSNTVSI (209 aa)) is the PARP catalytic domain.

This sequence belongs to the ARTD/PARP family. In terms of assembly, interacts with AHR. Post-translationally, auto-mono-ADP-ribosylated.

It localises to the nucleus. It catalyses the reaction L-aspartyl-[protein] + NAD(+) = 4-O-(ADP-D-ribosyl)-L-aspartyl-[protein] + nicotinamide. It carries out the reaction L-glutamyl-[protein] + NAD(+) = 5-O-(ADP-D-ribosyl)-L-glutamyl-[protein] + nicotinamide. The catalysed reaction is L-cysteinyl-[protein] + NAD(+) = S-(ADP-D-ribosyl)-L-cysteinyl-[protein] + nicotinamide + H(+). ADP-ribosyltransferase activity is inhibited by PJ34; inhibition is however not specific to TIPARP and other PARP-domain containing proteins are also inhibited by PJ34. Partially inhibited by KU0058948. Its function is as follows. ADP-ribosyltransferase that mediates mono-ADP-ribosylation of glutamate, aspartate and cysteine residues on target proteins. Acts as a negative regulator of AHR by mediating mono-ADP-ribosylation of AHR, leading to inhibit transcription activator activity of AHR. The protein is Protein mono-ADP-ribosyltransferase TIPARP of Homo sapiens (Human).